Consider the following 123-residue polypeptide: Large ribosomal subunit protein uL14 (123 aa).

Belongs to the universal ribosomal protein uL14 family. Part of the 50S ribosomal subunit. Forms a cluster with proteins L3 and L19. In the 70S ribosome, L14 and L19 interact and together make contacts with the 16S rRNA in bridges B5 and B8.

In terms of biological role, binds to 23S rRNA. Forms part of two intersubunit bridges in the 70S ribosome. The chain is Large ribosomal subunit protein uL14 from Buchnera aphidicola subsp. Acyrthosiphon kondoi (Acyrthosiphon kondoi symbiotic bacterium).